A 499-amino-acid chain; its full sequence is Ribose import ATP-binding protein RbsA (499 aa).

ABC transporter domains follow at residues 3-240 (VEMS…VGRE) and 250-494 (LEPG…TGGD). 35 to 42 (GENGAGKS) provides a ligand contact to ATP.

This sequence belongs to the ABC transporter superfamily. Ribose importer (TC 3.A.1.2.1) family. The complex is composed of an ATP-binding protein (RbsA), two transmembrane proteins (RbsC) and a solute-binding protein (RbsB).

It localises to the cell membrane. It catalyses the reaction D-ribose(out) + ATP + H2O = D-ribose(in) + ADP + phosphate + H(+). Part of the ABC transporter complex RbsABC involved in ribose import. Responsible for energy coupling to the transport system. This chain is Ribose import ATP-binding protein RbsA, found in Shouchella clausii (strain KSM-K16) (Alkalihalobacillus clausii).